The chain runs to 124 residues: Glycine cleavage system H protein (124 aa).

Residues 22–103 form the Lipoyl-binding domain; that stretch reads VFVVGITDNA…AYTAWIFKIK (82 aa). Lys-63 carries the post-translational modification N6-lipoyllysine.

Belongs to the GcvH family. In terms of assembly, the glycine cleavage system is composed of four proteins: P, T, L and H. (R)-lipoate serves as cofactor.

Functionally, the glycine cleavage system catalyzes the degradation of glycine. The H protein shuttles the methylamine group of glycine from the P protein to the T protein. In Bordetella pertussis (strain Tohama I / ATCC BAA-589 / NCTC 13251), this protein is Glycine cleavage system H protein.